The primary structure comprises 82 residues: Small ribosomal subunit protein bS16 (82 aa).

Belongs to the bacterial ribosomal protein bS16 family.

This Proteus mirabilis (strain HI4320) protein is Small ribosomal subunit protein bS16.